A 444-amino-acid polypeptide reads, in one-letter code: Argininosuccinate synthase (444 aa).

ATP contacts are provided by residues 18–26 (AFSGGLDTS) and A44. An L-citrulline-binding site is contributed by Y100. Residues G130 and T132 each coordinate ATP. L-aspartate contacts are provided by T132, N136, and D137. N136 contacts L-citrulline. D137 provides a ligand contact to ATP. The L-citrulline site is built by R140 and S193. D195 provides a ligand contact to ATP. The L-citrulline site is built by T202, E204, and E281.

It belongs to the argininosuccinate synthase family. Type 2 subfamily. Homotetramer.

Its subcellular location is the cytoplasm. It catalyses the reaction L-citrulline + L-aspartate + ATP = 2-(N(omega)-L-arginino)succinate + AMP + diphosphate + H(+). The protein operates within amino-acid biosynthesis; L-arginine biosynthesis; L-arginine from L-ornithine and carbamoyl phosphate: step 2/3. This is Argininosuccinate synthase from Mannheimia succiniciproducens (strain KCTC 0769BP / MBEL55E).